The sequence spans 168 residues: ATP synthase subunit b (168 aa).

A helical membrane pass occupies residues 13-33; the sequence is WTFLFQTLNLLVVMGLLYVFL.

Belongs to the ATPase B chain family. As to quaternary structure, F-type ATPases have 2 components, F(1) - the catalytic core - and F(0) - the membrane proton channel. F(1) has five subunits: alpha(3), beta(3), gamma(1), delta(1), epsilon(1). F(0) has three main subunits: a(1), b(2) and c(10-14). The alpha and beta chains form an alternating ring which encloses part of the gamma chain. F(1) is attached to F(0) by a central stalk formed by the gamma and epsilon chains, while a peripheral stalk is formed by the delta and b chains.

The protein resides in the cell membrane. Its function is as follows. F(1)F(0) ATP synthase produces ATP from ADP in the presence of a proton or sodium gradient. F-type ATPases consist of two structural domains, F(1) containing the extramembraneous catalytic core and F(0) containing the membrane proton channel, linked together by a central stalk and a peripheral stalk. During catalysis, ATP synthesis in the catalytic domain of F(1) is coupled via a rotary mechanism of the central stalk subunits to proton translocation. Functionally, component of the F(0) channel, it forms part of the peripheral stalk, linking F(1) to F(0). The chain is ATP synthase subunit b from Moorella thermoacetica (strain ATCC 39073 / JCM 9320).